A 100-amino-acid polypeptide reads, in one-letter code: Urease subunit gamma (100 aa).

It belongs to the urease gamma subunit family. In terms of assembly, heterotrimer of UreA (gamma), UreB (beta) and UreC (alpha) subunits. Three heterotrimers associate to form the active enzyme.

The protein localises to the cytoplasm. It catalyses the reaction urea + 2 H2O + H(+) = hydrogencarbonate + 2 NH4(+). Its pathway is nitrogen metabolism; urea degradation; CO(2) and NH(3) from urea (urease route): step 1/1. This Enterobacter sp. (strain 638) protein is Urease subunit gamma.